The chain runs to 60 residues: Large ribosomal subunit protein uL30 (60 aa).

The protein belongs to the universal ribosomal protein uL30 family. Part of the 50S ribosomal subunit.

This is Large ribosomal subunit protein uL30 from Lactobacillus johnsonii (strain CNCM I-12250 / La1 / NCC 533).